The sequence spans 373 residues: Alginate lyase (373 aa).

The N-terminal stretch at 1–25 is a signal peptide; that stretch reads MRLPMQKLLIPTLLGLAMFAGSVNA. Substrate-binding positions include 66–67, 139–140, and tyrosine 257; these read SK and HT.

It belongs to the polysaccharide lyase 5 family.

The protein localises to the periplasm. It carries out the reaction Eliminative cleavage of alginate to give oligosaccharides with 4-deoxy-alpha-L-erythro-hex-4-enuronosyl groups at their non-reducing ends and beta-D-mannuronate at their reducing end.. Its function is as follows. Catalyzes the depolymerization of alginate by cleaving the beta-1,4 glycosidic bond between two adjacent sugar residues via a beta-elimination mechanism. May serve to degrade mislocalized alginate that is trapped in the periplasmic space. The chain is Alginate lyase from Pseudomonas fluorescens.